A 242-amino-acid chain; its full sequence is Beta-carotene ketolase (242 aa).

It carries out the reaction all-trans-beta-carotene + 2 AH2 + 2 O2 = echinenone + 2 A + 3 H2O. The enzyme catalyses echinenone + 2 AH2 + 2 O2 = canthaxanthin + 2 A + 3 H2O. The protein operates within carotenoid biosynthesis; astaxanthin biosynthesis. Functionally, converts beta-carotene to canthaxanthin via echinenone. This chain is Beta-carotene ketolase (crtW), found in Paracoccus sp. (strain N81106 / MBIC 01143) (Agrobacterium aurantiacum).